The following is a 287-amino-acid chain: MLGSMALKLRKWIWASIPSLALILSSCSALVASVELKSLSELQNLADRNTELTKNKRTLITTLRESYGLNPKGTLNLLFEGWRYTLLSQRILERWQTEVGRFAKSFGNGSNQNSVQPNATLKGLKLSERSTTEIQLLAEQAITVSKQEVKEFTYKVESNKQFEATVKIKADLKIDPTKAMSHIENIFKDDETKKKDAQNSLTMSMGQNEALEATFTYSPATQGIFGRASFDRFTSNIKLNTKLRIQVSSTSDLMKKLLENSLTSSLKDQSFDNEGVNLFPYTLFALL.

The first 31 residues, Met1 to Val31, serve as a signal peptide directing secretion.

It belongs to the MG439/MG440 family.

This is an uncharacterized protein from Mycoplasma pneumoniae (strain ATCC 29342 / M129 / Subtype 1) (Mycoplasmoides pneumoniae).